The sequence spans 721 residues: Ribonuclease R (721 aa).

Residues 249-587 form the RNB domain; that stretch reads RRSIIDREII…VHRLLWMFIF (339 aa). The region spanning 639–719 is the S1 motif domain; that stretch reads GKEFIGVVTT…LTRKIDFELV (81 aa).

It belongs to the RNR ribonuclease family. RNase R subfamily.

The protein resides in the cytoplasm. The enzyme catalyses Exonucleolytic cleavage in the 3'- to 5'-direction to yield nucleoside 5'-phosphates.. Its function is as follows. 3'-5' exoribonuclease that releases 5'-nucleoside monophosphates and is involved in maturation of structured RNAs. This chain is Ribonuclease R, found in Ureaplasma parvum serovar 3 (strain ATCC 700970).